The primary structure comprises 764 residues: Ribosomal protein S6 kinase alpha-6 (764 aa).

Residues 1–24 are disordered; the sequence is MLPFAPVEDPWDQEDMEVFGSTSS. The 258-residue stretch at 93–350 folds into the Protein kinase 1 domain; sequence FDLLKVLGQG…VEEVKRHAFF (258 aa). ATP contacts are provided by residues 99-107 and lysine 125; that span reads LGQGSFGKV. Catalysis depends on aspartate 218, which acts as the Proton acceptor. 3 positions are modified to phosphoserine: serine 252, serine 392, and serine 409. Positions 351–420 constitute an AGC-kinase C-terminal domain; that stretch reads ASIDWNKLYK…VATSIAEEYK (70 aa). One can recognise a Protein kinase 2 domain in the interval 446 to 706; that stretch reads YELKEDIGIG…VLKHPWITQR (261 aa). ATP contacts are provided by residues 452–460 and lysine 475; that span reads IGIGSYSVC. The active-site Proton acceptor is the aspartate 563. Threonine 601 bears the Phosphothreonine mark.

This sequence belongs to the protein kinase superfamily. AGC Ser/Thr protein kinase family. S6 kinase subfamily. In terms of assembly, forms a complex with MAPK3/ERK1 but not with MAPK9 or MAPK14 in serum-starved cells. Requires Mg(2+) as cofactor. In terms of processing, phosphorylated at Ser-252, Ser-392, and Ser-409 in serum-starved cells.

It localises to the cytoplasm. The protein resides in the cytosol. The protein localises to the nucleus. The catalysed reaction is L-seryl-[protein] + ATP = O-phospho-L-seryl-[protein] + ADP + H(+). It carries out the reaction L-threonyl-[protein] + ATP = O-phospho-L-threonyl-[protein] + ADP + H(+). With respect to regulation, constitutively activated by phosphorylation at Ser-252, Ser-392, and Ser-409 in serum-starved cells. Does not require growth factor stimulation for significant kinase activity. Its function is as follows. Constitutively active serine/threonine-protein kinase that exhibits growth-factor-independent kinase activity and that may participate in p53/TP53-dependent cell growth arrest signaling and play an inhibitory role during embryogenesis. In Mus musculus (Mouse), this protein is Ribosomal protein S6 kinase alpha-6 (Rps6ka6).